Consider the following 678-residue polypeptide: Methionine--tRNA ligase (678 aa).

The 'HIGH' region motif lies at 12–22; the sequence is PYANGPIHLGH. Zn(2+)-binding residues include Cys-143, Cys-146, Cys-156, and Cys-159. A 'KMSKS' region motif is present at residues 328 to 332; it reads KMSKS. Position 331 (Lys-331) interacts with ATP. Residues 577 to 678 enclose the tRNA-binding domain; that stretch reads DFSKVDLRIA…SGAQPGMRVK (102 aa).

The protein belongs to the class-I aminoacyl-tRNA synthetase family. MetG type 1 subfamily. In terms of assembly, homodimer. Requires Zn(2+) as cofactor.

The protein resides in the cytoplasm. The catalysed reaction is tRNA(Met) + L-methionine + ATP = L-methionyl-tRNA(Met) + AMP + diphosphate. Its function is as follows. Is required not only for elongation of protein synthesis but also for the initiation of all mRNA translation through initiator tRNA(fMet) aminoacylation. The sequence is that of Methionine--tRNA ligase from Acidithiobacillus ferrooxidans (strain ATCC 23270 / DSM 14882 / CIP 104768 / NCIMB 8455) (Ferrobacillus ferrooxidans (strain ATCC 23270)).